The following is a 916-amino-acid chain: Isoleucine--tRNA ligase (916 aa).

Positions 58 to 68 (PYANGHLHIGH) match the 'HIGH' region motif. E568 provides a ligand contact to L-isoleucyl-5'-AMP. Residues 609 to 613 (KMSKS) carry the 'KMSKS' region motif. An ATP-binding site is contributed by K612. 4 residues coordinate Zn(2+): C891, C894, C906, and C909.

This sequence belongs to the class-I aminoacyl-tRNA synthetase family. IleS type 1 subfamily. Monomer. It depends on Zn(2+) as a cofactor.

The protein localises to the cytoplasm. The catalysed reaction is tRNA(Ile) + L-isoleucine + ATP = L-isoleucyl-tRNA(Ile) + AMP + diphosphate. Catalyzes the attachment of isoleucine to tRNA(Ile). As IleRS can inadvertently accommodate and process structurally similar amino acids such as valine, to avoid such errors it has two additional distinct tRNA(Ile)-dependent editing activities. One activity is designated as 'pretransfer' editing and involves the hydrolysis of activated Val-AMP. The other activity is designated 'posttransfer' editing and involves deacylation of mischarged Val-tRNA(Ile). The protein is Isoleucine--tRNA ligase of Campylobacter fetus subsp. fetus (strain 82-40).